The primary structure comprises 296 residues: uncharacterized protein (296 aa).

A run of 6 helical transmembrane segments spans residues Phe10–Leu29, Tyr36–Leu58, Phe112–Thr131, Ile188–Arg210, Met241–Phe260, and Met273–Ile295.

Its subcellular location is the cell membrane. This is an uncharacterized protein from Clostridium acetobutylicum (strain ATCC 824 / DSM 792 / JCM 1419 / IAM 19013 / LMG 5710 / NBRC 13948 / NRRL B-527 / VKM B-1787 / 2291 / W).